Reading from the N-terminus, the 246-residue chain is tRNA pseudouridine synthase A (246 aa).

Asp-51 acts as the Nucleophile in catalysis. Tyr-105 contacts substrate.

Belongs to the tRNA pseudouridine synthase TruA family.

The enzyme catalyses uridine(38/39/40) in tRNA = pseudouridine(38/39/40) in tRNA. Its function is as follows. Formation of pseudouridine at positions 38, 39 and 40 in the anticodon stem and loop of transfer RNAs. The polypeptide is tRNA pseudouridine synthase A (Thermoplasma volcanium (strain ATCC 51530 / DSM 4299 / JCM 9571 / NBRC 15438 / GSS1)).